Consider the following 392-residue polypeptide: Succinate--CoA ligase [ADP-forming] subunit beta (392 aa).

In terms of domain architecture, ATP-grasp spans 9–248 (KDILKKFGVS…TNEEDPFEVE (240 aa)). ATP is bound by residues Lys50, 57-59 (GRG), Glu103, Met106, and Glu111. Mg(2+) is bound by residues Asn203 and Asp217. Substrate contacts are provided by residues Asn268 and 325 to 327 (GIV).

This sequence belongs to the succinate/malate CoA ligase beta subunit family. In terms of assembly, heterotetramer of two alpha and two beta subunits. Mg(2+) is required as a cofactor.

The catalysed reaction is succinate + ATP + CoA = succinyl-CoA + ADP + phosphate. The enzyme catalyses GTP + succinate + CoA = succinyl-CoA + GDP + phosphate. Its pathway is carbohydrate metabolism; tricarboxylic acid cycle; succinate from succinyl-CoA (ligase route): step 1/1. In terms of biological role, succinyl-CoA synthetase functions in the citric acid cycle (TCA), coupling the hydrolysis of succinyl-CoA to the synthesis of either ATP or GTP and thus represents the only step of substrate-level phosphorylation in the TCA. The beta subunit provides nucleotide specificity of the enzyme and binds the substrate succinate, while the binding sites for coenzyme A and phosphate are found in the alpha subunit. The polypeptide is Succinate--CoA ligase [ADP-forming] subunit beta (Chlorobium limicola (strain DSM 245 / NBRC 103803 / 6330)).